The sequence spans 147 residues: Protein LOL1 (147 aa).

The tract at residues Met-1 to Ser-38 is disordered. Residues Ser-22 to Ser-38 show a composition bias toward polar residues. A putative zinc finger region spans residues Gln-47–Val-77.

It localises to the nucleus. In terms of biological role, putative zinc finger that may be involved in programmed cell death and defense response. This Oryza sativa subsp. japonica (Rice) protein is Protein LOL1 (LOL1).